Here is a 160-residue protein sequence, read N- to C-terminus: SsrA-binding protein (160 aa).

This sequence belongs to the SmpB family.

Its subcellular location is the cytoplasm. In terms of biological role, required for rescue of stalled ribosomes mediated by trans-translation. Binds to transfer-messenger RNA (tmRNA), required for stable association of tmRNA with ribosomes. tmRNA and SmpB together mimic tRNA shape, replacing the anticodon stem-loop with SmpB. tmRNA is encoded by the ssrA gene; the 2 termini fold to resemble tRNA(Ala) and it encodes a 'tag peptide', a short internal open reading frame. During trans-translation Ala-aminoacylated tmRNA acts like a tRNA, entering the A-site of stalled ribosomes, displacing the stalled mRNA. The ribosome then switches to translate the ORF on the tmRNA; the nascent peptide is terminated with the 'tag peptide' encoded by the tmRNA and targeted for degradation. The ribosome is freed to recommence translation, which seems to be the essential function of trans-translation. In Cronobacter sakazakii (strain ATCC BAA-894) (Enterobacter sakazakii), this protein is SsrA-binding protein.